Reading from the N-terminus, the 189-residue chain is Elongation factor P (189 aa).

It belongs to the elongation factor P family.

It localises to the cytoplasm. The protein operates within protein biosynthesis; polypeptide chain elongation. In terms of biological role, involved in peptide bond synthesis. Stimulates efficient translation and peptide-bond synthesis on native or reconstituted 70S ribosomes in vitro. Probably functions indirectly by altering the affinity of the ribosome for aminoacyl-tRNA, thus increasing their reactivity as acceptors for peptidyl transferase. The protein is Elongation factor P of Campylobacter lari (strain RM2100 / D67 / ATCC BAA-1060).